A 456-amino-acid chain; its full sequence is Bifunctional protein GlmU (456 aa).

The segment at 1-231 is pyrophosphorylase; the sequence is MERTCLAIIL…EEELTGCNTR (231 aa). UDP-N-acetyl-alpha-D-glucosamine-binding positions include 10-13, Lys24, Gln77, and 82-83; these read LAAG and GT. Asp107 contacts Mg(2+). UDP-N-acetyl-alpha-D-glucosamine is bound by residues Gly143, Glu157, Asn172, and Asn229. Asn229 provides a ligand contact to Mg(2+). Residues 232 to 252 form a linker region; sequence AELAYIERLWQQRRRQELMLA. Residues 253–456 form an N-acetyltransferase region; that stretch reads GVSMVAPETV…AARKKVKAAE (204 aa). UDP-N-acetyl-alpha-D-glucosamine-binding residues include Arg318 and Lys336. His348 (proton acceptor) is an active-site residue. Positions 351 and 362 each coordinate UDP-N-acetyl-alpha-D-glucosamine. Residues Ala365, 371–372, Ser390, Ser408, and Arg425 contribute to the acetyl-CoA site; that span reads NY.

The protein in the N-terminal section; belongs to the N-acetylglucosamine-1-phosphate uridyltransferase family. This sequence in the C-terminal section; belongs to the transferase hexapeptide repeat family. Homotrimer. It depends on Mg(2+) as a cofactor.

It is found in the cytoplasm. The catalysed reaction is alpha-D-glucosamine 1-phosphate + acetyl-CoA = N-acetyl-alpha-D-glucosamine 1-phosphate + CoA + H(+). It carries out the reaction N-acetyl-alpha-D-glucosamine 1-phosphate + UTP + H(+) = UDP-N-acetyl-alpha-D-glucosamine + diphosphate. It participates in nucleotide-sugar biosynthesis; UDP-N-acetyl-alpha-D-glucosamine biosynthesis; N-acetyl-alpha-D-glucosamine 1-phosphate from alpha-D-glucosamine 6-phosphate (route II): step 2/2. It functions in the pathway nucleotide-sugar biosynthesis; UDP-N-acetyl-alpha-D-glucosamine biosynthesis; UDP-N-acetyl-alpha-D-glucosamine from N-acetyl-alpha-D-glucosamine 1-phosphate: step 1/1. Its pathway is bacterial outer membrane biogenesis; LPS lipid A biosynthesis. Its function is as follows. Catalyzes the last two sequential reactions in the de novo biosynthetic pathway for UDP-N-acetylglucosamine (UDP-GlcNAc). The C-terminal domain catalyzes the transfer of acetyl group from acetyl coenzyme A to glucosamine-1-phosphate (GlcN-1-P) to produce N-acetylglucosamine-1-phosphate (GlcNAc-1-P), which is converted into UDP-GlcNAc by the transfer of uridine 5-monophosphate (from uridine 5-triphosphate), a reaction catalyzed by the N-terminal domain. In Sinorhizobium fredii (strain NBRC 101917 / NGR234), this protein is Bifunctional protein GlmU.